The primary structure comprises 400 residues: Golgin-45 (400 aa).

The segment covering 1-16 has biased composition (polar residues); sequence MTTKNLETKVTVTSSP. Residues 1–58 are disordered; it reads MTTKNLETKVTVTSSPIRGAGDGMETEEPPKSVEVTSGVQSRKHHSLQSPWKKAVPSE. At serine 15 the chain carries Phosphoserine. The Tankyrase-binding motif signature appears at 18-22; it reads RGAGD. At serine 49 the chain carries Phosphoserine. Residues 120 to 213 are a coiled coil; it reads NKELSEVKNV…QLERMSIQCD (94 aa). Threonine 348 carries the phosphothreonine modification. Serine 353 bears the Phosphoserine mark. The interval 394–400 is essential for interaction with GORASP2; that stretch reads RGELIAL.

Interacts with GORASP2. Interacts with the GTP-bound form of RAB2, but not with other Golgi Rab proteins. Identified in a complex with RAB2 and GORASP2. Post-translationally, ADP-ribosylated by tankyrase TNKS and TNKS2. Poly-ADP-ribosylated protein is recognized by RNF146, followed by ubiquitination. In terms of processing, ubiquitinated by RNF146 when poly-ADP-ribosylated, leading to its degradation. As to expression, detected in adrenal gland.

It localises to the golgi apparatus membrane. Its subcellular location is the nucleus. The protein localises to the cytoplasm. Its function is as follows. Required for normal Golgi structure and for protein transport from the endoplasmic reticulum (ER) through the Golgi apparatus to the cell surface. The sequence is that of Golgin-45 (BLZF1) from Homo sapiens (Human).